Consider the following 196-residue polypeptide: Carnitine operon protein CaiE (196 aa).

Residues 177–196 (RQMEENRPRLQGTTDVMPKR) are disordered.

This sequence belongs to the transferase hexapeptide repeat family.

It functions in the pathway amine and polyamine metabolism; carnitine metabolism. Overproduction of CaiE stimulates the activity of CaiB and CaiD. The chain is Carnitine operon protein CaiE from Escherichia coli O17:K52:H18 (strain UMN026 / ExPEC).